We begin with the raw amino-acid sequence, 315 residues long: Small ribosomal subunit protein uS9m (315 aa).

The N-terminal 42 residues, 1-42 (MMASLRHSITSALRSSRQGCSKSAQWQSLDQQFGALRISSRS), are a transit peptide targeting the mitochondrion. Residues 293–315 (PRKVERKKHGHVKARKMPTWVKR) are disordered. A compositionally biased stretch (basic residues) spans 296-315 (VERKKHGHVKARKMPTWVKR).

It belongs to the universal ribosomal protein uS9 family. Component of the mitochondrial small ribosomal subunit (mt-SSU). Mature N.crassa 74S mitochondrial ribosomes consist of a small (37S) and a large (54S) subunit. The 37S small subunit contains a 16S ribosomal RNA (16S mt-rRNA) and 32 different proteins. The 54S large subunit contains a 23S rRNA (23S mt-rRNA) and 42 different proteins.

Its subcellular location is the mitochondrion. In terms of biological role, component of the mitochondrial ribosome (mitoribosome), a dedicated translation machinery responsible for the synthesis of mitochondrial genome-encoded proteins, including at least some of the essential transmembrane subunits of the mitochondrial respiratory chain. The mitoribosomes are attached to the mitochondrial inner membrane and translation products are cotranslationally integrated into the membrane. The sequence is that of Small ribosomal subunit protein uS9m (mrp-9) from Neurospora crassa (strain ATCC 24698 / 74-OR23-1A / CBS 708.71 / DSM 1257 / FGSC 987).